A 71-amino-acid chain; its full sequence is Large ribosomal subunit protein uL29 (71 aa).

The disordered stretch occupies residues 32–51 (GVNKSTGGAPSNPGKISETK).

Belongs to the universal ribosomal protein uL29 family.

This Methanococcus maripaludis (strain DSM 14266 / JCM 13030 / NBRC 101832 / S2 / LL) protein is Large ribosomal subunit protein uL29.